A 256-amino-acid polypeptide reads, in one-letter code: Coiled-coil domain-containing protein 90B, mitochondrial (256 aa).

The transit peptide at 1 to 42 (MRNRWIWRFLRPECSGIRWISSPHGRLSPALRRGFLTTTTKS) directs the protein to the mitochondrion. Residues 106-164 (AQQEITIQQLMAHLDSIRKDMVILEKSEFANLRAENEKMKIELDQVKQQLINETSRIRA) adopt a coiled-coil conformation. Residues 231–253 (TIRYLAASVFTCLAIALGFYRFW) traverse the membrane as a helical segment.

Belongs to the CCDC90 family. Interacts with MCU.

Its subcellular location is the mitochondrion membrane. The polypeptide is Coiled-coil domain-containing protein 90B, mitochondrial (Ccdc90b) (Rattus norvegicus (Rat)).